Reading from the N-terminus, the 424-residue chain is Tyrosine--tRNA ligase (424 aa).

Tyrosine 37 lines the L-tyrosine pocket. The 'HIGH' region signature appears at 42–51 (PTADSLHLGH). The L-tyrosine site is built by tyrosine 174 and glutamine 178. A 'KMSKS' region motif is present at residues 234 to 238 (KFGKT). ATP is bound at residue lysine 237. Positions 357-414 (TGLIDALVASGLAKSKSEARTFIQSGSVAINGNKAEALDHAIGGDELLYGRFTILRRG) constitute an S4 RNA-binding domain.

The protein belongs to the class-I aminoacyl-tRNA synthetase family. TyrS type 1 subfamily. As to quaternary structure, homodimer.

The protein resides in the cytoplasm. The enzyme catalyses tRNA(Tyr) + L-tyrosine + ATP = L-tyrosyl-tRNA(Tyr) + AMP + diphosphate + H(+). Functionally, catalyzes the attachment of tyrosine to tRNA(Tyr) in a two-step reaction: tyrosine is first activated by ATP to form Tyr-AMP and then transferred to the acceptor end of tRNA(Tyr). The polypeptide is Tyrosine--tRNA ligase (Dechloromonas aromatica (strain RCB)).